Here is a 251-residue protein sequence, read N- to C-terminus: Flap endonuclease Xni (251 aa).

Mg(2+) is bound at residue Asp104. The 5'-3' exonuclease domain occupies 160–249 (VLPRQLPDYW…IDGNLQQLRL (90 aa)). Residues Leu171, Ala172, Pro180, Val182, and Ile185 each contribute to the K(+) site. Residues 184–189 (GIGPKS) form an interaction with DNA region.

Belongs to the Xni family. It depends on Mg(2+) as a cofactor. Requires K(+) as cofactor.

Functionally, has flap endonuclease activity. During DNA replication, flap endonucleases cleave the 5'-overhanging flap structure that is generated by displacement synthesis when DNA polymerase encounters the 5'-end of a downstream Okazaki fragment. This Salmonella dublin (strain CT_02021853) protein is Flap endonuclease Xni.